An 882-amino-acid chain; its full sequence is Alanine--tRNA ligase (882 aa).

Histidine 576, histidine 580, cysteine 678, and histidine 682 together coordinate Zn(2+).

This sequence belongs to the class-II aminoacyl-tRNA synthetase family. It depends on Zn(2+) as a cofactor.

It localises to the cytoplasm. It carries out the reaction tRNA(Ala) + L-alanine + ATP = L-alanyl-tRNA(Ala) + AMP + diphosphate. Catalyzes the attachment of alanine to tRNA(Ala) in a two-step reaction: alanine is first activated by ATP to form Ala-AMP and then transferred to the acceptor end of tRNA(Ala). Also edits incorrectly charged Ser-tRNA(Ala) and Gly-tRNA(Ala) via its editing domain. In Anaplasma marginale (strain St. Maries), this protein is Alanine--tRNA ligase.